We begin with the raw amino-acid sequence, 464 residues long: Cell division protein FtsA (464 aa).

Residues 392 to 464 form a disordered region; it reads EVIETDKDTE…FKKLMKSLFE (73 aa). The span at 416-455 shows a compositional bias: basic and acidic residues; that stretch reads KKENDEVAPEAPREESYEDRENHLEDEQQTEGKAKEESKF.

The protein belongs to the FtsA/MreB family. As to quaternary structure, self-interacts. Interacts with FtsZ.

The protein resides in the cell membrane. Its function is as follows. Cell division protein that is involved in the assembly of the Z ring. May serve as a membrane anchor for the Z ring. The chain is Cell division protein FtsA from Staphylococcus epidermidis (strain ATCC 12228 / FDA PCI 1200).